A 440-amino-acid chain; its full sequence is Glutamyl-tRNA reductase (440 aa).

Residues 55–58, serine 115, 120–122, and glutamine 126 each bind substrate; these read TCNR and ETQ. Cysteine 56 (nucleophile) is an active-site residue. 199 to 204 contributes to the NADP(+) binding site; sequence GSGEMG.

The protein belongs to the glutamyl-tRNA reductase family. As to quaternary structure, homodimer.

The catalysed reaction is (S)-4-amino-5-oxopentanoate + tRNA(Glu) + NADP(+) = L-glutamyl-tRNA(Glu) + NADPH + H(+). Its pathway is porphyrin-containing compound metabolism; protoporphyrin-IX biosynthesis; 5-aminolevulinate from L-glutamyl-tRNA(Glu): step 1/2. In terms of biological role, catalyzes the NADPH-dependent reduction of glutamyl-tRNA(Glu) to glutamate 1-semialdehyde (GSA). The chain is Glutamyl-tRNA reductase from Helicobacter hepaticus (strain ATCC 51449 / 3B1).